The primary structure comprises 347 residues: Holliday junction branch migration complex subunit RuvB (347 aa).

The interval 13-195 (NEDAVTSGEV…FGIVEHMQYY (183 aa)) is large ATPase domain (RuvB-L). ATP is bound by residues Leu-34, Arg-35, Gly-76, Lys-79, Thr-80, Thr-81, 142 to 144 (EDY), Arg-185, Tyr-195, and Arg-232. Thr-80 provides a ligand contact to Mg(2+). Residues 196–266 (TIDELEKIVQ…TTEGALKQLQ (71 aa)) are small ATPAse domain (RuvB-S). The head domain (RuvB-H) stretch occupies residues 269 to 347 (DEGLDQTDRR…QLGLPVPGDK (79 aa)). Arg-329 is a binding site for DNA.

Belongs to the RuvB family. In terms of assembly, homohexamer. Forms an RuvA(8)-RuvB(12)-Holliday junction (HJ) complex. HJ DNA is sandwiched between 2 RuvA tetramers; dsDNA enters through RuvA and exits via RuvB. An RuvB hexamer assembles on each DNA strand where it exits the tetramer. Each RuvB hexamer is contacted by two RuvA subunits (via domain III) on 2 adjacent RuvB subunits; this complex drives branch migration. In the full resolvosome a probable DNA-RuvA(4)-RuvB(12)-RuvC(2) complex forms which resolves the HJ.

It localises to the cytoplasm. The catalysed reaction is ATP + H2O = ADP + phosphate + H(+). Functionally, the RuvA-RuvB-RuvC complex processes Holliday junction (HJ) DNA during genetic recombination and DNA repair, while the RuvA-RuvB complex plays an important role in the rescue of blocked DNA replication forks via replication fork reversal (RFR). RuvA specifically binds to HJ cruciform DNA, conferring on it an open structure. The RuvB hexamer acts as an ATP-dependent pump, pulling dsDNA into and through the RuvAB complex. RuvB forms 2 homohexamers on either side of HJ DNA bound by 1 or 2 RuvA tetramers; 4 subunits per hexamer contact DNA at a time. Coordinated motions by a converter formed by DNA-disengaged RuvB subunits stimulates ATP hydrolysis and nucleotide exchange. Immobilization of the converter enables RuvB to convert the ATP-contained energy into a lever motion, pulling 2 nucleotides of DNA out of the RuvA tetramer per ATP hydrolyzed, thus driving DNA branch migration. The RuvB motors rotate together with the DNA substrate, which together with the progressing nucleotide cycle form the mechanistic basis for DNA recombination by continuous HJ branch migration. Branch migration allows RuvC to scan DNA until it finds its consensus sequence, where it cleaves and resolves cruciform DNA. This is Holliday junction branch migration complex subunit RuvB from Lactobacillus helveticus (strain DPC 4571).